A 792-amino-acid chain; its full sequence is Ribonucleoside-diphosphate reductase large subunit (792 aa).

An ATP-cone domain is found at 1–92 (MHVIKRDGRQ…VSNLHKETKK (92 aa)). Residues 5 to 6 (KR), 11 to 17 (ERVMFDK), threonine 53, and aspartate 57 each bind ATP. Lysine 17 is subject to N6-acetyllysine. Residues serine 202 and serine 217 each coordinate GDP. The cysteines at positions 218 and 444 are disulfide-linked. Residues 226 to 228 (DSI), lysine 243, arginine 256, and 263 to 264 (AG) contribute to the dTTP site. The residue at position 376 (lysine 376) is an N6-acetyllysine. GDP is bound at residue asparagine 427. Residue asparagine 427 is the Proton acceptor of the active site. Cysteine 429 (cysteine radical intermediate) is an active-site residue. GDP-binding positions include glutamate 431 and 604 to 607 (TAST). Residue glutamate 431 is the Proton acceptor of the active site. Phosphothreonine is present on threonine 751.

This sequence belongs to the ribonucleoside diphosphate reductase large chain family. Heterodimer of a large and a small subunit. Heterodimer with small subunit RRM2 or RRM2B. The heterodimer with RRM2 has higher catalytic activity than the heterodimer with RRM2B. Interacts with AHCYL1 which inhibits its activity.

Its subcellular location is the cytoplasm. It catalyses the reaction a 2'-deoxyribonucleoside 5'-diphosphate + [thioredoxin]-disulfide + H2O = a ribonucleoside 5'-diphosphate + [thioredoxin]-dithiol. Under complex allosteric control mediated by deoxynucleoside triphosphates and ATP binding to separate specificity and activation sites on the M1 subunit. The type of nucleotide bound at the specificity site determines substrate preference. It seems probable that ATP makes the enzyme reduce CDP and UDP, dGTP favors ADP reduction and dTTP favors GDP reduction. Stimulated by ATP and inhibited by dATP binding to the activity site, the dATP inhibition is mediated by AHCYL1 which stabilizes dATP in the site. In terms of biological role, provides the precursors necessary for DNA synthesis. Catalyzes the biosynthesis of deoxyribonucleotides from the corresponding ribonucleotides. In Homo sapiens (Human), this protein is Ribonucleoside-diphosphate reductase large subunit (RRM1).